A 1327-amino-acid polypeptide reads, in one-letter code: Vascular endothelial growth factor receptor 1 (1327 aa).

The first 24 residues, 1-24 (MPRQLLSGTVLLGAAFLLAGSTSG), serve as a signal peptide directing secretion. Topologically, residues 25-749 (SKLKVPVLSV…GTVERSNLEL (725 aa)) are extracellular. Ig-like C2-type domains lie at 30–121 (PVLS…SIVY), 120–222 (VYVF…HRET), 227–323 (DIKL…TTVI), 331–417 (NLKR…LTVT), 424–545 (PQIY…RNVS), 552–644 (PSGF…KDVS), and 651–737 (PALL…AYVT). N-linked (GlcNAc...) asparagine glycosylation is found at Asn-48, Asn-73, Asn-82, Asn-98, and Asn-125. Cys-51 and Cys-105 are oxidised to a cystine. An intrachain disulfide couples Cys-154 to Cys-203. An N-linked (GlcNAc...) asparagine glycan is attached at Asn-247. Cysteines 248 and 307 form a disulfide. N-linked (GlcNAc...) asparagine glycans are attached at residues Asn-319, Asn-383, Asn-398, Asn-409, Asn-413, Asn-470, Asn-512, Asn-543, Asn-593, Asn-615, and Asn-663. Cys-450 and Cys-531 are joined by a disulfide. Cys-573 and Cys-626 are oxidised to a cystine. Residues Cys-672 and Cys-721 are joined by a disulfide bond. A helical transmembrane segment spans residues 750–770 (ITLTCTCVAATLFWLLLTLFI). The Cytoplasmic segment spans residues 771 to 1327 (RKLKRPYFSE…SVVHYSQPSI (557 aa)). Positions 819–1151 (LKLGKSLGHG…ELVKRLGDLL (333 aa)) constitute a Protein kinase domain. Residues 825–833 (LGHGAFGKV) and Lys-853 each bind ATP. The interval 950–971 (ASVTSSESFASSGFQEDKSLSD) is disordered. Residues 951 to 961 (SVTSSESFASS) are compositionally biased toward low complexity. Catalysis depends on Asp-1015, which acts as the Proton acceptor. Residues Tyr-1046, Tyr-1162, Tyr-1202, Tyr-1231, Tyr-1316, and Tyr-1322 each carry the phosphotyrosine; by autocatalysis modification.

Belongs to the protein kinase superfamily. Tyr protein kinase family. CSF-1/PDGF receptor subfamily. Interacts with VEGFA, VEGFB and PGF. Monomer in the absence of bound VEGFA, VEGFB or PGF. Homodimer in the presence of bound VEGFA, VEGFB and PGF. Autophosphorylated on tyrosine residues upon ligand binding.

It localises to the cell membrane. The protein resides in the endosome. It is found in the secreted. The enzyme catalyses L-tyrosyl-[protein] + ATP = O-phospho-L-tyrosyl-[protein] + ADP + H(+). Its activity is regulated as follows. Present in an inactive conformation in the absence of bound ligand. Binding of VEGFA, VEGFB or PGF leads to dimerization and activation by autophosphorylation on tyrosine residues. Its function is as follows. Tyrosine-protein kinase that acts as a cell-surface receptor for VEGFA, VEGFB and PGF, and plays an essential role in the regulation of angiogenesis, cell survival, cell migration, macrophage function, and chemotaxis. Acts as a positive regulator of postnatal retinal hyaloid vessel regression. Has very high affinity for VEGFA and relatively low protein kinase activity; may function as a negative regulator of VEGFA signaling by limiting the amount of free VEGFA and preventing its binding to KDR. Ligand binding leads to the activation of several signaling cascades. Activation of PLCG1 leads to the production of the cellular signaling molecules diacylglycerol and inositol 1,4,5-trisphosphate and the activation of protein kinase C. Mediates phosphorylation of PIK3R1, the regulatory subunit of phosphatidylinositol 3-kinase, leading to activation of phosphatidylinositol kinase and the downstream signaling pathway. Mediates activation of MAPK1/ERK2, MAPK3/ERK1 and the MAP kinase signaling pathway, as well as of the AKT1 signaling pathway. Phosphorylates PLCG1. Promotes phosphorylation of AKT1 and CBL. This is Vascular endothelial growth factor receptor 1 (FLT1) from Gallus gallus (Chicken).